The chain runs to 417 residues: Gamma-glutamyl phosphate reductase (417 aa).

Belongs to the gamma-glutamyl phosphate reductase family.

Its subcellular location is the cytoplasm. It catalyses the reaction L-glutamate 5-semialdehyde + phosphate + NADP(+) = L-glutamyl 5-phosphate + NADPH + H(+). The protein operates within amino-acid biosynthesis; L-proline biosynthesis; L-glutamate 5-semialdehyde from L-glutamate: step 2/2. Functionally, catalyzes the NADPH-dependent reduction of L-glutamate 5-phosphate into L-glutamate 5-semialdehyde and phosphate. The product spontaneously undergoes cyclization to form 1-pyrroline-5-carboxylate. In Clostridium novyi (strain NT), this protein is Gamma-glutamyl phosphate reductase.